The primary structure comprises 353 residues: Protein CEPU-1 (353 aa).

Residues 1 to 28 (MAQAKMQHPVSWVIFAGMAALLLFQGVP) form the signal peptide. Ig-like C2-type domains are found at residues 37–124 (PKAM…PKTS), 134–216 (PKIT…VKVT), and 220–314 (PPYI…ETTT). Residues N42, N68, and N150 are each glycosylated (N-linked (GlcNAc...) asparagine). C55 and C113 are oxidised to a cystine. Intrachain disulfides connect C155-C199 and C241-C293. 3 N-linked (GlcNAc...) asparagine glycosylation sites follow: N282, N290, and N303. S330 carries GPI-anchor amidated serine lipidation. Positions 331-353 (GAWRRGSCAWLLALPLAQLARQF) are cleaved as a propeptide — removed in mature form.

The protein belongs to the immunoglobulin superfamily. IgLON family. Interacts with NEGR1. Found on the dendrites, somata and axons of developing Purkinje cells. Undetectable on other neurons like Golgi or granule cells.

Its subcellular location is the cell membrane. In terms of biological role, it may be a cellular address molecule specific to Purkinje cells. It may represent a receptor or a subunit of a receptor complex. This Gallus gallus (Chicken) protein is Protein CEPU-1.